A 1786-amino-acid chain; its full sequence is Transcription initiation factor TFIID subunit 1b (1786 aa).

Disordered regions lie at residues 54-83 and 350-372; these read EDYD…PVVL and FGSR…PQLL. The span at 61–83 shows a compositional bias: basic and acidic residues; that stretch reads GQEKEHVPVEKSFDSEEREPVVL. The segment covering 352 to 362 has biased composition (polar residues); the sequence is SRGSQSTNEST. Positions 574 to 650 constitute a Ubiquitin-like domain; that stretch reads MTIVVKSLGG…VHLLRTKVHL (77 aa). A compositionally biased stretch (basic residues) spans 1303 to 1313; the sequence is MKTNKHCPKYR. Disordered regions lie at residues 1303–1382, 1397–1471, and 1596–1634; these read MKTN…DVAA, LKIS…KDQA, and SERE…ESGQ. Over residues 1357–1377 the composition is skewed to polar residues; that stretch reads TKISVNEATKVGDSTSKTPGS. Positions 1397-1407 are enriched in basic residues; sequence LKISSKAKPKA. Polar residues predominate over residues 1433–1464; the sequence is HNPSVSGQLLPSTETDQAASSRYTTSVPQPSL. Coiled coils occupy residues 1591-1620 and 1752-1786; these read REVI…LENY and LADE…DSLR. Positions 1604 to 1613 are enriched in basic residues; it reads RKAKQKKKLQ. A Bromo domain is found at 1656–1774; sequence KRRKKGQVGL…DEYRDELKEA (119 aa).

It belongs to the TAF1 family. In terms of assembly, component of the TFIID complex. TFIID is composed of TATA binding protein (TBP) and a number of TBP-associated factors (TAFs) whose MWs range from 14-217 kDa. In terms of tissue distribution, expressed in roots, shoots, leaves and inflorescences.

The protein resides in the nucleus. In terms of biological role, TAFs are components of the transcription factor IID (TFIID) complex that is essential for mediating regulation of RNA polymerase transcription. Core scaffold of the TFIID complex. Acts as a histone acetyltransferase involved in the light regulation of growth and gene expression. Required for H3K9, H3K27, and H4K12 acetylation on the target promoters. In Arabidopsis thaliana (Mouse-ear cress), this protein is Transcription initiation factor TFIID subunit 1b (TAF1B).